The chain runs to 320 residues: Beta-sarcoglycan (320 aa).

A compositionally biased stretch (low complexity) spans 1 to 10 (MAAAAAAAAA). A disordered region spans residues 1–34 (MAAAAAAAAATEQQGSNGPVKKSMREKAVERRNV). At 1-67 (MAAAAAAAAA…GLRGRKGNLA (67 aa)) the chain is on the cytoplasmic side. Positions 23–34 (SMREKAVERRNV) are enriched in basic and acidic residues. The helical; Signal-anchor for type II membrane protein transmembrane segment at 68–88 (ICVIVLLFILAVINLLITLVI) threads the bilayer. Over 89–320 (WAVIRIGPNG…VSDNPCGNTH (232 aa)) the chain is Extracellular. Asparagine 160, asparagine 213, and asparagine 260 each carry an N-linked (GlcNAc...) asparagine glycan. 2 disulfide bridges follow: cysteine 290–cysteine 316 and cysteine 292–cysteine 309.

This sequence belongs to the sarcoglycan beta/delta/gamma/zeta family. In terms of assembly, cross-link to form 2 major subcomplexes: one consisting of SGCB, SGCD and SGCG and the other consisting of SGCB and SGCD. The association between SGCB and SGCG is particularly strong while SGCA is loosely associated with the other sarcoglycans. Disulfide bonds are present. Most strongly expressed in skeletal and heart muscle. Also detected in proliferating myoblasts.

It is found in the cell membrane. It localises to the sarcolemma. Its subcellular location is the cytoplasm. The protein resides in the cytoskeleton. Component of the sarcoglycan complex, a subcomplex of the dystrophin-glycoprotein complex which forms a link between the F-actin cytoskeleton and the extracellular matrix. This Mus musculus (Mouse) protein is Beta-sarcoglycan (Sgcb).